A 503-amino-acid polypeptide reads, in one-letter code: Probable dolichyl pyrophosphate Man9GlcNAc2 alpha-1,3-glucosyltransferase (503 aa).

The Cytoplasmic segment spans residues 1–46; that stretch reads MKERIKDKAWRPQFIKLNNPDTSKKIVSQKSKKPEIVDLSSPGNND. A helical transmembrane segment spans residues 47–67; sequence LVTISILCVLLCFQLAISLNP. The Lumenal portion of the chain corresponds to 68–151; it reads HSGESQPPMY…SRGYESIAHK (84 aa). Residues 152 to 172 form a helical membrane-spanning segment; sequence LFMRLSAIIPFYIFYLPPLIF. Residues 173–181 are Cytoplasmic-facing; sequence YFTRSKKMS. The chain crosses the membrane as a helical span at residues 182–202; that stretch reads PILYALALLYPSLLVIDNGHF. Residues 203-211 lie on the Lumenal side of the membrane; it reads QYNSISLGL. The chain crosses the membrane as a helical span at residues 212–232; sequence FLATYMFLTKNFTIIGSILFV. The Cytoplasmic portion of the chain corresponds to 233–239; that stretch reads AALNYKQ. A helical membrane pass occupies residues 240 to 257; the sequence is MELYHALPVFVFILARSI. Over 258 to 268 the chain is Lumenal; the sequence is NKTQLFNSFRR. Residues 269 to 289 form a helical membrane-spanning segment; that stretch reads ILTIGLFVVGTFLIIWLPFLL. The Cytoplasmic portion of the chain corresponds to 290–332; that stretch reads TGTAKDVIIRVFPFNRGLYEDKVASFWCAFSFILKRLPLQSVQ. A helical membrane pass occupies residues 333–353; it reads IYISTALVLAGSAPSLLVLFL. Residues 354-359 lie on the Lumenal side of the membrane; sequence RPTEKQ. A helical membrane pass occupies residues 360 to 379; sequence FRISLTATGLSFFLFSFHVH. The Cytoplasmic segment spans residues 380–382; it reads EKT. The helical transmembrane segment at 383–403 threads the bilayer; sequence ILLAAVPALLLISEYTSLVIW. Over 404–420 the chain is Lumenal; that stretch reads FLNITNISIFSLCVKDN. A helical membrane pass occupies residues 421–441; that stretch reads FALSLSFFFAYFVVSYAYTAP. Residues 442–443 are Cytoplasmic-facing; that stretch reads RK. A helical membrane pass occupies residues 444–464; the sequence is ISHILTILIGFAICILELYGP. Topologically, residues 465 to 474 are lumenal; sequence SNQRFPHIYQ. The chain crosses the membrane as a helical span at residues 475–495; the sequence is LANAFFSCVHFIYFLLYLSFA. Residues 496–503 are Cytoplasmic-facing; that stretch reads SFEKTKKE.

Belongs to the ALG6/ALG8 glucosyltransferase family.

The protein resides in the endoplasmic reticulum membrane. It catalyses the reaction an alpha-D-Man-(1-&gt;2)-alpha-D-Man-(1-&gt;2)-alpha-D-Man-(1-&gt;3)-[alpha-D-Man-(1-&gt;2)-alpha-D-Man-(1-&gt;3)-[alpha-D-Man-(1-&gt;2)-alpha-D-Man-(1-&gt;6)]-alpha-D-Man-(1-&gt;6)]-beta-D-Man-(1-&gt;4)-beta-D-GlcNAc-(1-&gt;4)-alpha-D-GlcNAc-diphospho-di-trans,poly-cis-dolichol + a di-trans,poly-cis-dolichyl beta-D-glucosyl phosphate = an alpha-D-Glc-(1-&gt;3)-alpha-D-Man-(1-&gt;2)-alpha-D-Man-(1-&gt;2)-alpha-D-Man-(1-&gt;3)-[alpha-D-Man-(1-&gt;2)-alpha-D-Man-(1-&gt;3)-[alpha-D-Man-(1-&gt;2)-alpha-D-Man-(1-&gt;6)]-alpha-D-Man-(1-&gt;6)]-beta-D-Man-(1-&gt;4)-beta-D-GlcNAc-(1-&gt;4)-alpha-D-GlcNAc-diphospho-di-trans,poly-cis-dolichol + a di-trans,poly-cis-dolichyl phosphate + H(+). Its pathway is protein modification; protein glycosylation. Functionally, adds the first glucose residue to the lipid-linked oligosaccharide precursor for N-linked glycosylation. Transfers glucose from dolichyl phosphate glucose (Dol-P-Glc) onto the lipid-linked oligosaccharide Man(9)GlcNAc(2)-PP-Dol. In Caenorhabditis elegans, this protein is Probable dolichyl pyrophosphate Man9GlcNAc2 alpha-1,3-glucosyltransferase.